Here is a 222-residue protein sequence, read N- to C-terminus: Hexitol phosphatase B (222 aa).

The active-site Nucleophile is Asp-13. A divalent metal cation contacts are provided by Asp-13 and Asp-15. Residues 13-15 (DMD), 115-116 (SA), and Lys-148 contribute to the substrate site. Asp-15 (proton donor) is an active-site residue. Asp-173 contacts a divalent metal cation.

Belongs to the HAD-like hydrolase superfamily. CbbY/CbbZ/Gph/YieH family. It depends on Mg(2+) as a cofactor. Requires Mn(2+) as cofactor. Co(2+) is required as a cofactor. The cofactor is Zn(2+).

It carries out the reaction sugar phosphate + H2O = sugar + phosphate.. It catalyses the reaction 2-deoxy-D-glucose 6-phosphate + H2O = 2-deoxy-D-glucose + phosphate. The catalysed reaction is D-mannitol 1-phosphate + H2O = D-mannitol + phosphate. The enzyme catalyses D-sorbitol 6-phosphate + H2O = D-sorbitol + phosphate. Functionally, sugar-phosphate phosphohydrolase that catalyzes the dephosphorylation of D-mannitol 1-phosphate and D-sorbitol 6-phosphate. Also catalyzes the dephosphorylation of 2-deoxyglucose 6-phosphate (2dGlu6P); this is a biologically important activity in vivo since it contributes to the elimination of this toxic compound and plays an important role in the resistance of E.coli to 2-deoxyglucose. To a lesser extent, is also able to dephosphorylate mannose 6-phosphate (Man6P), erythrose-4-phosphate, 2-deoxyribose-5-phosphate (2dRib5P), ribose-5-phosphate (Rib5P) and glucose-6-phosphate (Glu6P) in vitro. The sequence is that of Hexitol phosphatase B from Escherichia coli (strain K12).